The primary structure comprises 428 residues: MDHDPKERLLLPPRAAAAAAANGPHRRAAPAAGGGGGGVAIDVHGLKRRGGGRRSWVRVDAATGASEAVEVAKPALMRRLDLPARDLRLLDPLFVYPSAILGRERAVVCNLERIRCIITADEALILRDPDVAGGGAETEEAVRRYVAELQRRLVDRADDLPFEFIALEVALEAACSFLDAQAVELEADAYPLLDELTTKISTLNLERVRRLKSKLVALTRRVQKVRDEIEQLMDDDGDMAEMYLTEKKRRMEASLLEEQAFQGMGNSGFGSSFSAPVSPVSSPPASRRLEKELSFARSRHDSFKSADSSQYSIEELEMLLEAYFVVIDYTLSKLTSLKEYIDDTEDFINIQLDNVRNQLIQFELLLTTATFVVAIFGVVSGVFGMNFEVDLFNVPHAFEWTLVITGVCGLVIFCCFIWYFKKRRFFPL.

2 helical membrane-spanning segments follow: residues 364–384 (LLLT…GVFG) and 400–420 (WTLV…IWYF). A Required for magnesium transport activity motif is present at residues 384–386 (GMN).

This sequence belongs to the CorA metal ion transporter (MIT) (TC 1.A.35.5) family.

Its subcellular location is the membrane. Functionally, magnesium transporter that may mediate the influx of magnesium. The chain is Magnesium transporter MRS2-C from Oryza sativa subsp. indica (Rice).